Here is a 660-residue protein sequence, read N- to C-terminus: DNA ligase (660 aa).

Residues 33–37 (DFVYD), 82–83 (SL), and Glu-110 contribute to the NAD(+) site. The active-site N6-AMP-lysine intermediate is Lys-112. The NAD(+) site is built by Arg-133, Glu-167, Lys-281, and Lys-305. Cys-396, Cys-399, Cys-412, and Cys-417 together coordinate Zn(2+). The BRCT domain occupies 583–660 (DENRLLAGKK…SFEDIKSYLN (78 aa)).

It belongs to the NAD-dependent DNA ligase family. LigA subfamily. Mg(2+) is required as a cofactor. Requires Mn(2+) as cofactor.

The enzyme catalyses NAD(+) + (deoxyribonucleotide)n-3'-hydroxyl + 5'-phospho-(deoxyribonucleotide)m = (deoxyribonucleotide)n+m + AMP + beta-nicotinamide D-nucleotide.. DNA ligase that catalyzes the formation of phosphodiester linkages between 5'-phosphoryl and 3'-hydroxyl groups in double-stranded DNA using NAD as a coenzyme and as the energy source for the reaction. It is essential for DNA replication and repair of damaged DNA. In Borrelia garinii subsp. bavariensis (strain ATCC BAA-2496 / DSM 23469 / PBi) (Borreliella bavariensis), this protein is DNA ligase.